The primary structure comprises 131 residues: MVAAKKHVPIVKKRSKGFMRHQSDRFMRVDSAWRKPKGIDNRVRRRFRGTLAMPSIGYGSNKKTRHMMPSGHKAFLVSNVKDVELLLMHNKTYAAEIAHNVSSRKRIEIIARAKQLSVKVTNAKAKVTTEV.

The protein belongs to the eukaryotic ribosomal protein eL32 family. As to quaternary structure, component of the large ribosomal subunit (LSU). Mature N.crassa ribosomes consist of a small (40S) and a large (60S) subunit. The 40S small subunit contains 1 molecule of ribosomal RNA (18S rRNA) and at least 32 different proteins. The large 60S subunit contains 3 rRNA molecules (26S, 5.8S and 5S rRNA) and at least 42 different proteins.

It is found in the cytoplasm. In terms of biological role, component of the ribosome, a large ribonucleoprotein complex responsible for the synthesis of proteins in the cell. The small ribosomal subunit (SSU) binds messenger RNAs (mRNAs) and translates the encoded message by selecting cognate aminoacyl-transfer RNA (tRNA) molecules. The large subunit (LSU) contains the ribosomal catalytic site termed the peptidyl transferase center (PTC), which catalyzes the formation of peptide bonds, thereby polymerizing the amino acids delivered by tRNAs into a polypeptide chain. The nascent polypeptides leave the ribosome through a tunnel in the LSU and interact with protein factors that function in enzymatic processing, targeting, and the membrane insertion of nascent chains at the exit of the ribosomal tunnel. The protein is Large ribosomal subunit protein eL32 (crp-63) of Neurospora crassa (strain ATCC 24698 / 74-OR23-1A / CBS 708.71 / DSM 1257 / FGSC 987).